Here is a 502-residue protein sequence, read N- to C-terminus: Alpha-globin transcription factor CP2 (502 aa).

One can recognise a Grh/CP2 DB domain in the interval 63-300 (EILPFQYVLC…SPGFNSSHSS (238 aa)). Residues 133–386 (EHQQLEGWRW…LFNALKGRMV (254 aa)) form a DNA-binding region. Residues 241-265 (KGADRKQKIDREKMEKRTPHEKEKY) show a composition bias toward basic and acidic residues. 2 disordered regions span residues 241 to 268 (KGAD…YQPS) and 294 to 326 (FNSS…NLLP). S353 bears the Phosphoserine mark.

Belongs to the grh/CP2 family. CP2 subfamily. In terms of assembly, binds to DNA as a dimer. Interacts with UBP1 and PIAS1, and is probably part of a complex containing TFCP2, UBP1 and PIAS1. Component of the SSP (stage selector protein) complex, which appears to be a heteromer of TFCP2 and 2 copies of NFE4.

It localises to the nucleus. Its function is as follows. Binds a variety of cellular promoters including fibrinogen, alpha-globin promoters. Activation of the alpha-globin promoter in erythroid cells is via synergistic interaction with UBP1. Functions as part of the SSP (stage selector protein) complex. Facilitates the interaction of the gamma-globin genes with enhancer elements contained in the locus control region in fetal erythroid cells. Interacts by binding to the stage selector element (SSE) in the proximal gamma-globin promoter. The sequence is that of Alpha-globin transcription factor CP2 (Tfcp2) from Mus musculus (Mouse).